A 378-amino-acid chain; its full sequence is Chorismate synthase (378 aa).

A disordered region spans residues 37-60 (EEEIQKDLTRRRPGQNDLTTPRDE). Residue arginine 47 coordinates NADP(+). FMN contacts are provided by residues 124-126 (RSS), glycine 289, 304-308 (KPTST), and arginine 330.

The protein belongs to the chorismate synthase family. As to quaternary structure, homotetramer. Requires FMNH2 as cofactor.

The catalysed reaction is 5-O-(1-carboxyvinyl)-3-phosphoshikimate = chorismate + phosphate. The protein operates within metabolic intermediate biosynthesis; chorismate biosynthesis; chorismate from D-erythrose 4-phosphate and phosphoenolpyruvate: step 7/7. Functionally, catalyzes the anti-1,4-elimination of the C-3 phosphate and the C-6 proR hydrogen from 5-enolpyruvylshikimate-3-phosphate (EPSP) to yield chorismate, which is the branch point compound that serves as the starting substrate for the three terminal pathways of aromatic amino acid biosynthesis. This reaction introduces a second double bond into the aromatic ring system. In Leptospira biflexa serovar Patoc (strain Patoc 1 / Ames), this protein is Chorismate synthase.